We begin with the raw amino-acid sequence, 103 residues long: MTALRRTISIIFVFYLSCTLFVNIFGVQARNLCKTDEDCVLRCQDPGANCILGICHCSRQQVETELTKVIRCKTDRDCPDSHQCPKDYYYACLNNGECTCISV.

Residues 1–29 (MTALRRTISIIFVFYLSCTLFVNIFGVQA) form the signal peptide. 6 disulfide bridges follow: C33/C50, C39/C55, C43/C57, C72/C92, C78/C98, and C84/C100.

Belongs to the DEFL family.

It is found in the secreted. This chain is Defensin-like protein 290, found in Arabidopsis thaliana (Mouse-ear cress).